A 69-amino-acid chain; its full sequence is Alternative ribosome-rescue factor A (69 aa).

It belongs to the alternative ribosome-rescue factor A family. As to quaternary structure, interacts with the 70S ribosome and release factor 2.

Rescues ribosomes stalled at the 3' end of non-stop mRNAs. Recruits release factor 2 (RF2) to the stalled ribosome, helping position it correctly in the ribosomal A site so its GGQ motif can hydrolyze the peptidyl-tRNA bond. This is Alternative ribosome-rescue factor A (arfA) from Haemophilus influenzae (strain ATCC 51907 / DSM 11121 / KW20 / Rd).